A 92-amino-acid polypeptide reads, in one-letter code: Envelope glycoprotein J (92 aa).

Residues 1 to 21 form the signal peptide; the sequence is MSLRAVWHLGLLGSLVGAVLA. Over 22 to 49 the chain is Extracellular; that stretch reads ATHRGPAANTTDPLTHAPVSPHPSPLGG. An N-linked (GlcNAc...) asparagine; by host glycan is attached at N30. The helical transmembrane segment at 50–70 threads the bilayer; that stretch reads FAVPLVVGGLCAVVLGAACLL. Topologically, residues 71–92 are cytoplasmic; that stretch reads ELLRRTCRGWGRYHPYMDPVVV.

It belongs to the alphaherpesvirinae glycoprotein J family.

It is found in the host Golgi apparatus membrane. It localises to the host endoplasmic reticulum membrane. Its subcellular location is the host endosome membrane. Inhibits host cell apoptosis. Induces an increase in reactive oxygen species (ROS) in the host cell. This is Envelope glycoprotein J (gJ) from Homo sapiens (Human).